A 366-amino-acid polypeptide reads, in one-letter code: Left-right determination factor 1 (366 aa).

An N-terminal signal peptide occupies residues 1-21 (MQPLWLCWALWVLPLASPGAA). The propeptide at 22–76 (LTGEQLLGSLLRQLQLKEVPTLDRADMEELVIPTHVRAQYVALLQRSHGDRSRGK) is or 135. An N-linked (GlcNAc...) asparagine glycan is attached at N158. Cystine bridges form between C251/C264, C263/C316, C293/C351, and C297/C353.

Belongs to the TGF-beta family. In terms of processing, the processing of the protein may also occur at the second R-X-X-R site located at AA 132-135. Processing appears to be regulated in a cell-type specific manner.

The protein resides in the secreted. In terms of biological role, required for left-right axis determination as a regulator of LEFTY2 and NODAL. The protein is Left-right determination factor 1 (LEFTY1) of Homo sapiens (Human).